A 305-amino-acid polypeptide reads, in one-letter code: tRNA dimethylallyltransferase (305 aa).

Residue 11-18 participates in ATP binding; that stretch reads GPTAVGKT. 13 to 18 is a substrate binding site; it reads TAVGKT. Residues 36 to 39 form an interaction with substrate tRNA region; the sequence is DSMQ.

The protein belongs to the IPP transferase family. Monomer. Requires Mg(2+) as cofactor.

The enzyme catalyses adenosine(37) in tRNA + dimethylallyl diphosphate = N(6)-dimethylallyladenosine(37) in tRNA + diphosphate. Its function is as follows. Catalyzes the transfer of a dimethylallyl group onto the adenine at position 37 in tRNAs that read codons beginning with uridine, leading to the formation of N6-(dimethylallyl)adenosine (i(6)A). The polypeptide is tRNA dimethylallyltransferase (Listeria innocua serovar 6a (strain ATCC BAA-680 / CLIP 11262)).